The sequence spans 273 residues: 4-hydroxy-tetrahydrodipicolinate reductase (273 aa).

NAD(+) contacts are provided by residues 12 to 17 (GAGGRM) and Glu38. Position 39 (Arg39) interacts with NADP(+). NAD(+) is bound by residues 102–104 (GTT) and 126–129 (AANF). Residue His159 is the Proton donor/acceptor of the active site. His160 serves as a coordination point for (S)-2,3,4,5-tetrahydrodipicolinate. Catalysis depends on Lys163, which acts as the Proton donor. 169–170 (GT) is a binding site for (S)-2,3,4,5-tetrahydrodipicolinate.

It belongs to the DapB family. Homotetramer.

It is found in the cytoplasm. It catalyses the reaction (S)-2,3,4,5-tetrahydrodipicolinate + NAD(+) + H2O = (2S,4S)-4-hydroxy-2,3,4,5-tetrahydrodipicolinate + NADH + H(+). It carries out the reaction (S)-2,3,4,5-tetrahydrodipicolinate + NADP(+) + H2O = (2S,4S)-4-hydroxy-2,3,4,5-tetrahydrodipicolinate + NADPH + H(+). It functions in the pathway amino-acid biosynthesis; L-lysine biosynthesis via DAP pathway; (S)-tetrahydrodipicolinate from L-aspartate: step 4/4. In terms of biological role, catalyzes the conversion of 4-hydroxy-tetrahydrodipicolinate (HTPA) to tetrahydrodipicolinate. This Pectobacterium carotovorum subsp. carotovorum (strain PC1) protein is 4-hydroxy-tetrahydrodipicolinate reductase.